Here is a 463-residue protein sequence, read N- to C-terminus: Phosphomethylpyrimidine synthase (463 aa).

Substrate is bound by residues asparagine 80, methionine 109, tyrosine 138, histidine 173, 193–195, 234–237, and glutamate 273; these read SRG and DGLR. Histidine 277 is a binding site for Zn(2+). Tyrosine 300 serves as a coordination point for substrate. Histidine 341 serves as a coordination point for Zn(2+). [4Fe-4S] cluster contacts are provided by cysteine 421, cysteine 424, and cysteine 429.

This sequence belongs to the ThiC family. Homodimer. The cofactor is [4Fe-4S] cluster.

The catalysed reaction is 5-amino-1-(5-phospho-beta-D-ribosyl)imidazole + S-adenosyl-L-methionine = 4-amino-2-methyl-5-(phosphooxymethyl)pyrimidine + CO + 5'-deoxyadenosine + formate + L-methionine + 3 H(+). It participates in cofactor biosynthesis; thiamine diphosphate biosynthesis. In terms of biological role, catalyzes the synthesis of the hydroxymethylpyrimidine phosphate (HMP-P) moiety of thiamine from aminoimidazole ribotide (AIR) in a radical S-adenosyl-L-methionine (SAM)-dependent reaction. The sequence is that of Phosphomethylpyrimidine synthase from Anaeromyxobacter dehalogenans (strain 2CP-1 / ATCC BAA-258).